We begin with the raw amino-acid sequence, 414 residues long: DNA primase small subunit PriS (414 aa).

Catalysis depends on residues aspartate 98, aspartate 100, and aspartate 312.

The protein belongs to the eukaryotic-type primase small subunit family. In terms of assembly, heterodimer of a small subunit (PriS) and a large subunit (PriL). Mg(2+) is required as a cofactor. Mn(2+) serves as cofactor.

Functionally, catalytic subunit of DNA primase, an RNA polymerase that catalyzes the synthesis of short RNA molecules used as primers for DNA polymerase during DNA replication. The small subunit contains the primase catalytic core and has DNA synthesis activity on its own. Binding to the large subunit stabilizes and modulates the activity, increasing the rate of DNA synthesis while decreasing the length of the DNA fragments, and conferring RNA synthesis capability. The DNA polymerase activity may enable DNA primase to also catalyze primer extension after primer synthesis. May also play a role in DNA repair. The protein is DNA primase small subunit PriS of Methanosarcina acetivorans (strain ATCC 35395 / DSM 2834 / JCM 12185 / C2A).